The primary structure comprises 377 residues: Glutamate 5-kinase (377 aa).

Lys-21 serves as a coordination point for ATP. Substrate contacts are provided by Ser-61, Asp-149, and Asn-161. ATP-binding positions include 181-182 (SD) and 223-229 (SGGMTSK). Positions 286-363 (RGSVQVDAGA…REHEELLGYA (78 aa)) constitute a PUA domain.

This sequence belongs to the glutamate 5-kinase family.

Its subcellular location is the cytoplasm. The catalysed reaction is L-glutamate + ATP = L-glutamyl 5-phosphate + ADP. It participates in amino-acid biosynthesis; L-proline biosynthesis; L-glutamate 5-semialdehyde from L-glutamate: step 1/2. Its function is as follows. Catalyzes the transfer of a phosphate group to glutamate to form L-glutamate 5-phosphate. The polypeptide is Glutamate 5-kinase (Novosphingobium aromaticivorans (strain ATCC 700278 / DSM 12444 / CCUG 56034 / CIP 105152 / NBRC 16084 / F199)).